Consider the following 601-residue polypeptide: Potassium-transporting ATPase potassium-binding subunit (601 aa).

Helical transmembrane passes span 3–23, 62–82, 132–152, 179–199, 283–303, 314–334, 367–387, 397–417, 419–439, 459–479, 523–543, and 564–584; these read ASAW…AWPL, HYAL…YALQ, LGLS…AFAL, AWVL…QGVI, LTNL…CFAF, VAIL…VTAA, FGIS…CGAV, LGGM…GGAG, GLYG…LMIG, VAIL…VLAP, VLLA…VLAI, and GPLF…LNYV.

It belongs to the KdpA family. As to quaternary structure, the system is composed of three essential subunits: KdpA, KdpB and KdpC.

It is found in the cell inner membrane. In terms of biological role, part of the high-affinity ATP-driven potassium transport (or Kdp) system, which catalyzes the hydrolysis of ATP coupled with the electrogenic transport of potassium into the cytoplasm. This subunit binds the periplasmic potassium ions and delivers the ions to the membrane domain of KdpB through an intramembrane tunnel. This is Potassium-transporting ATPase potassium-binding subunit from Paracidovorax citrulli (strain AAC00-1) (Acidovorax citrulli).